The sequence spans 301 residues: Protein phosphatase 1 regulatory subunit 3B (301 aa).

The short motif at 79-82 is the PP1-binding motif element; sequence RVSF. The CBM21 domain maps to 142 to 250; that stretch reads RNRLQAESVC…SNKGLNYRIV (109 aa).

Interacts with glycogen, PPP1CC catalytic subunit of PP1 and PYGL. Associates with glycogen particles. Forms complexes with debranching enzyme, glycogen phosphorylase, glycogen synthase and phosphorylase kinase which is necessary for its regulation of PP1 activity.

Functionally, acts as a glycogen-targeting subunit for phosphatase PP1. Facilitates interaction of the PP1 with enzymes of the glycogen metabolism and regulates its activity. Suppresses the rate at which PP1 dephosphorylates (inactivates) glycogen phosphorylase and enhances the rate at which it activates glycogen synthase and therefore limits glycogen breakdown. This chain is Protein phosphatase 1 regulatory subunit 3B (ppp1r3b), found in Xenopus tropicalis (Western clawed frog).